A 348-amino-acid polypeptide reads, in one-letter code: NADH-quinone oxidoreductase subunit H 1 (348 aa).

8 helical membrane passes run 11–31, 83–103, 136–156, 172–192, 208–228, 268–288, 289–309, and 324–344; these read IYYI…LLTV, FAFL…FAVI, VGVL…VLAG, SAQM…VFML, GAWY…CSLA, MVTV…GPAF, LPGW…CMWI, and LGWK…GIVV.

It belongs to the complex I subunit 1 family. As to quaternary structure, NDH-1 is composed of 14 different subunits. Subunits NuoA, H, J, K, L, M, N constitute the membrane sector of the complex.

Its subcellular location is the cell inner membrane. The enzyme catalyses a quinone + NADH + 5 H(+)(in) = a quinol + NAD(+) + 4 H(+)(out). In terms of biological role, NDH-1 shuttles electrons from NADH, via FMN and iron-sulfur (Fe-S) centers, to quinones in the respiratory chain. The immediate electron acceptor for the enzyme in this species is believed to be ubiquinone. Couples the redox reaction to proton translocation (for every two electrons transferred, four hydrogen ions are translocated across the cytoplasmic membrane), and thus conserves the redox energy in a proton gradient. This subunit may bind ubiquinone. The protein is NADH-quinone oxidoreductase subunit H 1 of Geobacter sulfurreducens (strain ATCC 51573 / DSM 12127 / PCA).